We begin with the raw amino-acid sequence, 35 residues long: Ranatuerin-2SPa (35 aa).

Cys28 and Cys33 form a disulfide bridge.

Expressed by the skin glands.

The protein resides in the secreted. Its function is as follows. Antibacterial activity against Gram-positive bacterium S.aureus. Shows no detectable hemolytic activity towards human erythrocytes. This Lithobates septentrionalis (Mink frog) protein is Ranatuerin-2SPa.